We begin with the raw amino-acid sequence, 161 residues long: RNA pyrophosphohydrolase (161 aa).

One can recognise a Nudix hydrolase domain in the interval 6-149; the sequence is GYRPNVGIIL…KREVYRRAMR (144 aa). A Nudix box motif is present at residues 38-59; sequence GGIKKDESPEEALFRELKEEVG.

Belongs to the Nudix hydrolase family. RppH subfamily. A divalent metal cation is required as a cofactor.

Its function is as follows. Accelerates the degradation of transcripts by removing pyrophosphate from the 5'-end of triphosphorylated RNA, leading to a more labile monophosphorylated state that can stimulate subsequent ribonuclease cleavage. The polypeptide is RNA pyrophosphohydrolase (Hahella chejuensis (strain KCTC 2396)).